The sequence spans 168 residues: MSEENTTNNEAAAAEGKAPAGFGIKRVFTKDLSFEVPAGLGAFSLQGQPNVGQDLNTQINRVDDTHYEVVLKVTVTVKMGEDKVAFLAEVHQAGIFQVVGIEGPQLQQVLSTACPQILFPYVRETIDSLAVRGGFAPVLLPQINFDALFVQAVAQAKAQADSQAEADA.

It belongs to the SecB family. Homotetramer, a dimer of dimers. One homotetramer interacts with 1 SecA dimer.

It is found in the cytoplasm. Functionally, one of the proteins required for the normal export of preproteins out of the cell cytoplasm. It is a molecular chaperone that binds to a subset of precursor proteins, maintaining them in a translocation-competent state. It also specifically binds to its receptor SecA. This chain is Protein-export protein SecB, found in Saccharophagus degradans (strain 2-40 / ATCC 43961 / DSM 17024).